Reading from the N-terminus, the 509-residue chain is Maturase K (509 aa).

The protein belongs to the intron maturase 2 family. MatK subfamily.

It is found in the plastid. The protein resides in the chloroplast. Usually encoded in the trnK tRNA gene intron. Probably assists in splicing its own and other chloroplast group II introns. This is Maturase K from Thuja occidentalis (Northern white-cedar).